The sequence spans 407 residues: RNA-binding motif, single-stranded-interacting protein 2 (407 aa).

Met1 carries the N-acetylmethionine modification. Positions 14–51 are disordered; that stretch reads FGYNKNNKKPYVSLSQQMAPPSPSSSTPNSSSGSTAHD. The segment covering 37-47 has biased composition (low complexity); the sequence is SSSTPNSSSGS. RRM domains are found at residues 56–129 and 135–220; these read TNLY…MAKQ and TNLY…FADG. The residue at position 106 (Ser106) is a Phosphoserine. A phosphoserine mark is found at Ser280 and Ser285. The span at 374–392 shows a compositional bias: low complexity; it reads PSSSVSVEESGSQQSQVPV. The tract at residues 374–398 is disordered; the sequence is PSSSVSVEESGSQQSQVPVDAPSEH.

Its subcellular location is the nucleus. In Bos taurus (Bovine), this protein is RNA-binding motif, single-stranded-interacting protein 2 (RBMS2).